The sequence spans 60 residues: Large ribosomal subunit protein uL30 (60 aa).

Belongs to the universal ribosomal protein uL30 family. Part of the 50S ribosomal subunit.

The chain is Large ribosomal subunit protein uL30 from Polaromonas sp. (strain JS666 / ATCC BAA-500).